Reading from the N-terminus, the 629-residue chain is MSLASIRRLAAGAAVIAAASGGAVYLSPSVASSDKGGGPILDSLRRRLGDPTASVPSRSAQESALIAATASDPLDVLVIGGGATGSGVALDAVTRGLRVGLVEREDFSSGTSSRSTKLIHGGVRYLEKAVFNLDYGQLKLVFHALEERKQLIENAPHLCHALPCMTPCFDWFEVIYFWMGLKMYDLVAGPRLLHLSRYYSAKESIELFPTLARKGKDKNLRGTVVYYDGQMNDSRLNVGLACTAALAGAAVLNHAEVVSLITDDATKRIIGARIRNNLTGQEFNSYAKVVVNAAGPFCDSIRKMIDEDTKPMICPSSGVHIVLPDYYSPEGMGLIVPKTKDGRVVFMLPWLGRTVAGTTDSNTSITSLPEPHEDEIQFILDAISDYLNIKVRRTDVLSAWSGIRPLAMDPTAKSTESISRDHVVFEENPGLVTITGGKWTTYRSMAEDAVDAAIKSGQLKPTNECVTQKLQLLGSYGWEPSSFTTLAQQYVRMKKTYGGKVVPGAMDTAAAKHLSHAYGSMADRVATIAQEEGLGKRLAHGHPFLEAEVAYCARHEYCESAVDFIARRCRIAFLDTDAAARALQRVVEILASEHKWDKSRQKQELQKAKEFLETFKSSKNAQFNDGKHN.

The transit peptide at 1–48 (MSLASIRRLAAGAAVIAAASGGAVYLSPSVASSDKGGGPILDSLRRRL) directs the protein to the mitochondrion. 75 to 103 (DVLVIGGGATGSGVALDAVTRGLRVGLVE) serves as a coordination point for FAD.

Belongs to the FAD-dependent glycerol-3-phosphate dehydrogenase family. FAD serves as cofactor. As to expression, expressed in germinating seedlings. Also detected in roots, leaves, flowers, developing siliques and germinating seeds.

It is found in the mitochondrion inner membrane. It carries out the reaction a quinone + sn-glycerol 3-phosphate = dihydroxyacetone phosphate + a quinol. It participates in polyol metabolism; glycerol degradation via glycerol kinase pathway; glycerone phosphate from sn-glycerol 3-phosphate (anaerobic route): step 1/1. Functionally, required for glycerol catabolism and involved in NADH/NAD(+) homeostasis. Essential for postgerminative growth and seedling establishment. This Arabidopsis thaliana (Mouse-ear cress) protein is Glycerol-3-phosphate dehydrogenase SDP6, mitochondrial.